Consider the following 751-residue polypeptide: Photosystem I P700 chlorophyll a apoprotein A1 (751 aa).

The next 8 membrane-spanning stretches (helical) occupy residues 73–96, 159–182, 198–222, 294–312, 349–372, 388–414, 435–457, and 532–550; these read IFSAHFGQLSVIFLWLSGMYFHGA, LYCTAIGGLAMAALMLFAGWFHYH, MNHHLAGLLGLGCLGWTGHQIHLSL, TAHHHLALAVLFLAAGHMY, WHAQLAINLAMMGSLSIIVAHHMY, LSLFTHHMWIGGFCIVGAGAHASIFMV, AIVSHLNWVCIFLGFHSFGLYIH, and FLVHHIHAFTIHVTVLILV. Positions 574 and 583 each coordinate [4Fe-4S] cluster. Helical transmembrane passes span 590–611 and 665–687; these read HVFLGLFWMYNSLSVAIFHFSW and LSAYGLIFLAAHFVWAFSLMFLF. Histidine 676 is a chlorophyll a' binding site. Chlorophyll a contacts are provided by methionine 684 and tyrosine 692. Position 693 (tryptophan 693) interacts with phylloquinone. Residues 725–745 traverse the membrane as a helical segment; that stretch reads AVGVAHYLLGGIGTTWAFFLA.

Belongs to the PsaA/PsaB family. In terms of assembly, the PsaA/B heterodimer binds the P700 chlorophyll special pair and subsequent electron acceptors. PSI consists of a core antenna complex that captures photons, and an electron transfer chain that converts photonic excitation into a charge separation. The eukaryotic PSI reaction center is composed of at least 11 subunits. P700 is a chlorophyll a/chlorophyll a' dimer, A0 is one or more chlorophyll a, A1 is one or both phylloquinones and FX is a shared 4Fe-4S iron-sulfur center. is required as a cofactor.

Its subcellular location is the plastid. The protein localises to the chloroplast thylakoid membrane. It carries out the reaction reduced [plastocyanin] + hnu + oxidized [2Fe-2S]-[ferredoxin] = oxidized [plastocyanin] + reduced [2Fe-2S]-[ferredoxin]. Functionally, psaA and PsaB bind P700, the primary electron donor of photosystem I (PSI), as well as the electron acceptors A0, A1 and FX. PSI is a plastocyanin/cytochrome c6-ferredoxin oxidoreductase, converting photonic excitation into a charge separation, which transfers an electron from the donor P700 chlorophyll pair to the spectroscopically characterized acceptors A0, A1, FX, FA and FB in turn. Oxidized P700 is reduced on the lumenal side of the thylakoid membrane by plastocyanin or cytochrome c6. This Pyropia yezoensis (Susabi-nori) protein is Photosystem I P700 chlorophyll a apoprotein A1.